The sequence spans 255 residues: Aliphatic sulfonates import ATP-binding protein SsuB (255 aa).

Residues 12-233 form the ABC transporter domain; the sequence is LLLNAVSKHY…RLGSVRLAEL (222 aa). 44 to 51 contacts ATP; the sequence is GRSGGGKS.

Belongs to the ABC transporter superfamily. Aliphatic sulfonates importer (TC 3.A.1.17.2) family. As to quaternary structure, the complex is composed of two ATP-binding proteins (SsuB), two transmembrane proteins (SsuC) and a solute-binding protein (SsuA).

Its subcellular location is the cell inner membrane. It catalyses the reaction ATP + H2O + aliphatic sulfonate-[sulfonate-binding protein]Side 1 = ADP + phosphate + aliphatic sulfonateSide 2 + [sulfonate-binding protein]Side 1.. In terms of biological role, part of the ABC transporter complex SsuABC involved in aliphatic sulfonates import. Responsible for energy coupling to the transport system. The polypeptide is Aliphatic sulfonates import ATP-binding protein SsuB (Shigella flexneri).